A 177-amino-acid chain; its full sequence is Large ribosomal subunit protein bL9 (177 aa).

It belongs to the bacterial ribosomal protein bL9 family.

Functionally, binds to the 23S rRNA. In Rhodopirellula baltica (strain DSM 10527 / NCIMB 13988 / SH1), this protein is Large ribosomal subunit protein bL9.